The chain runs to 513 residues: Plexin domain-containing protein 2 (513 aa).

The first 24 residues, 1 to 24, serve as a signal peptide directing secretion; that stretch reads MGARSESLVGVVLLFQLLADRLWC. The Extracellular portion of the chain corresponds to 25-438; that stretch reads AATASDSLYD…AEMKTGTLHT (414 aa). 6 N-linked (GlcNAc...) asparagine glycosylation sites follow: Asn-88, Asn-145, Asn-198, Asn-206, Asn-222, and Asn-330. Residues 312–357 form the PSI domain; that stretch reads TCLQFNSCSSCVSSMIGFNCSWCNIPQRCSSGFDRHRQDWVENGCT. Residues 439-459 traverse the membrane as a helical segment; it reads GLIIGILILVLLIITAILVAV. Over 460-513 the chain is Cytoplasmic; the sequence is YMYHHPTSSASLFLIERRPSRWPAMKFRRGSGHPAYAEVEPIGEKEGFIVSEQC.

It belongs to the plexin family.

It localises to the membrane. This is Plexin domain-containing protein 2 (plxdc2) from Xenopus laevis (African clawed frog).